We begin with the raw amino-acid sequence, 310 residues long: Low-salt glycan biosynthesis protein Agl12 (310 aa).

NAD(+) contacts are provided by residues G7–G13, D32–T35, and D58–I59. S82 lines the substrate pocket. T97 serves as a coordination point for NAD(+). Substrate-binding positions include T122 and T122–E124. The Proton donor role is filled by D123. Catalysis depends on proton acceptor residues E124 and Y146. Y146 to K150 serves as a coordination point for NAD(+). Residue N175 coordinates substrate. N176 is a binding site for NAD(+). Substrate is bound by residues K185–L186, P201–Y203, R210, N245, and R269–H272.

The protein belongs to the NAD(P)-dependent epimerase/dehydratase family. dTDP-glucose dehydratase subfamily. NAD(+) is required as a cofactor.

It participates in protein modification; protein glycosylation. Its pathway is cell surface structure biogenesis; S-layer biogenesis. Its function is as follows. Lyase involved in N-glycan biosynthetic pathway that takes place under low-salt conditions (1.75 M instead of 3.4 M). Participates in the formation of the tetrasaccharide present at 'Asn-532' of S-layer glycoprotein Csg, consisting of a sulfated hexose, 2 hexoses and rhamnose. Involved in the addition of final rhamnose (sugar 4) of the tetrasaccharide on the dolichol phosphate carrier. In Haloferax volcanii (strain ATCC 29605 / DSM 3757 / JCM 8879 / NBRC 14742 / NCIMB 2012 / VKM B-1768 / DS2) (Halobacterium volcanii), this protein is Low-salt glycan biosynthesis protein Agl12 (agl12).